Here is a 380-residue protein sequence, read N- to C-terminus: Cytochrome b (380 aa).

The next 4 helical transmembrane spans lie at Phe34–Met54, Trp78–Ile99, Trp114–Leu134, and Phe179–Thr199. Heme b is bound by residues His84 and His98. Residues His183 and His197 each coordinate heme b. A ubiquinone is bound at residue His202. 4 helical membrane-spanning segments follow: residues Thr227 to Ser247, Leu289 to His309, Leu321 to Ser341, and Phe348 to Pro368.

This sequence belongs to the cytochrome b family. In terms of assembly, the cytochrome bc1 complex contains 11 subunits: 3 respiratory subunits (MT-CYB, CYC1 and UQCRFS1), 2 core proteins (UQCRC1 and UQCRC2) and 6 low-molecular weight proteins (UQCRH/QCR6, UQCRB/QCR7, UQCRQ/QCR8, UQCR10/QCR9, UQCR11/QCR10 and a cleavage product of UQCRFS1). This cytochrome bc1 complex then forms a dimer. The cofactor is heme b.

The protein resides in the mitochondrion inner membrane. Component of the ubiquinol-cytochrome c reductase complex (complex III or cytochrome b-c1 complex) that is part of the mitochondrial respiratory chain. The b-c1 complex mediates electron transfer from ubiquinol to cytochrome c. Contributes to the generation of a proton gradient across the mitochondrial membrane that is then used for ATP synthesis. In Pygoscelis papua (Gentoo penguin), this protein is Cytochrome b (MT-CYB).